A 736-amino-acid chain; its full sequence is Melanotransferrin (736 aa).

The signal sequence occupies residues 1–19; that stretch reads MRCRSAAMWIFLALRTALG. Transferrin-like domains are found at residues 23–357 and 366–706; these read VRWC…GLLC and LRWC…GMQS. 2 cysteine pairs are disulfide-bonded: cysteine 26–cysteine 63 and cysteine 36–cysteine 54. The Fe(3+) site is built by aspartate 78 and tyrosine 107. N-linked (GlcNAc...) asparagine glycosylation occurs at asparagine 118. 4 disulfides stabilise this stretch: cysteine 130–cysteine 216, cysteine 172–cysteine 189, cysteine 186–cysteine 199, and cysteine 257–cysteine 271. Threonine 132 contributes to the hydrogencarbonate binding site. An N-linked (GlcNAc...) asparagine glycan is attached at asparagine 135. Positions 136, 138, and 139 each coordinate hydrogencarbonate. Tyrosine 210 provides a ligand contact to Fe(3+). Residues histidine 279 and tyrosine 451 each coordinate Fe(3+). Asparagine 515 is a glycosylation site (N-linked (GlcNAc...) asparagine). Fe(3+) is bound at residue histidine 625. Residue glycine 711 is the site of GPI-anchor amidated glycine attachment. Positions 712 to 736 are cleaved as a propeptide — removed in mature form; that stretch reads AAVGAPGASLLPLLPLAVGLLLSSL.

It belongs to the transferrin family.

The protein resides in the cell membrane. Its function is as follows. Involved in iron cellular uptake. Seems to be internalized and then recycled back to the cell membrane. Binds a single atom of iron per subunit. Could also bind zinc. The protein is Melanotransferrin of Oryctolagus cuniculus (Rabbit).